The chain runs to 64 residues: Large ribosomal subunit protein eL24 (64 aa).

4 residues coordinate Zn(2+): C6, C9, C32, and C36. Residues 6 to 36 (CNFCGKSIEPGTGKKFVKKDGSVMFICSSKC) form a C4-type zinc finger.

It belongs to the eukaryotic ribosomal protein eL24 family. In terms of assembly, part of the 50S ribosomal subunit. Forms a cluster with proteins L3 and L14. Requires Zn(2+) as cofactor.

Binds to the 23S rRNA. The sequence is that of Large ribosomal subunit protein eL24 from Methanococcus aeolicus (strain ATCC BAA-1280 / DSM 17508 / OCM 812 / Nankai-3).